The following is a 776-amino-acid chain: Probable E3 ubiquitin-protein ligase HECTD2 (776 aa).

The tract at residues 1-46 is disordered; that stretch reads MSEAVRVPSPATPLVVAAPAPEERKGKESEREKLPPIVSAGAGATA. Residues 7–20 are compositionally biased toward low complexity; sequence VPSPATPLVVAAPA. Residue serine 9 is modified to Phosphoserine. Basic and acidic residues predominate over residues 21–34; it reads PEERKGKESEREKL. In terms of domain architecture, HECT spans 437 to 776; the sequence is KRADLKKKLK…ISNSEGFGLE (340 aa). The Glycyl thioester intermediate role is filled by cysteine 744.

The enzyme catalyses S-ubiquitinyl-[E2 ubiquitin-conjugating enzyme]-L-cysteine + [acceptor protein]-L-lysine = [E2 ubiquitin-conjugating enzyme]-L-cysteine + N(6)-ubiquitinyl-[acceptor protein]-L-lysine.. The protein operates within protein modification; protein ubiquitination. Its function is as follows. E3 ubiquitin-protein ligase which accepts ubiquitin from an E2 ubiquitin-conjugating enzyme in the form of a thioester and then directly transfers the ubiquitin to targeted substrates. (Microbial infection) Catalyzes ubiquitination of Botulinum neurotoxin A light chain (LC) of C.botulinum neurotoxin type A (BoNT/A). This is Probable E3 ubiquitin-protein ligase HECTD2 from Homo sapiens (Human).